Consider the following 34-residue polypeptide: Photosystem I reaction center subunit XII (34 aa).

Residues 11–31 (VAIAFVVALIAGIAALLLSTA) form a helical membrane-spanning segment.

The protein belongs to the PsaM family. In terms of assembly, the G.violaceus PSI reaction center is composed of one copy each of PsaA,B,C,D,E,F,L,M and Z, and forms trimeric complexes.

The protein localises to the cell inner membrane. This chain is Photosystem I reaction center subunit XII, found in Gloeobacter violaceus (strain ATCC 29082 / PCC 7421).